A 783-amino-acid polypeptide reads, in one-letter code: Coiled-coil domain-containing protein 30 (783 aa).

The span at 1 to 22 (MSQEKNEMFESEWSKEREREKQ) shows a compositional bias: basic and acidic residues. Disordered stretches follow at residues 1–26 (MSQE…LASG), 101–191 (LGGK…LTMK), and 209–231 (LLQS…SSGE). Positions 22-98 (QLASGLDTAE…LSQEFAQLNH (77 aa)) form a coiled coil. The segment covering 106–115 (APSNLITSEN) has biased composition (polar residues). The span at 131–191 (IQSRKEETEE…EEKEQQLTMK (61 aa)) shows a compositional bias: basic and acidic residues. Coiled-coil stretches lie at residues 165–497 (REGQ…LNVH) and 527–622 (DKRI…RIIR). The interval 731–755 (EEIKSKEAMASSKSPEKSPENLVCS) is disordered.

Belongs to the prefoldin subunit beta family. In terms of tissue distribution, expressed in brain, kidney, pancreas, placenta, liver, thymus and prostate.

The protein is Coiled-coil domain-containing protein 30 (CCDC30) of Homo sapiens (Human).